A 292-amino-acid polypeptide reads, in one-letter code: 4-hydroxy-tetrahydrodipicolinate synthase (292 aa).

T45 provides a ligand contact to pyruvate. The active-site Proton donor/acceptor is Y133. K161 functions as the Schiff-base intermediate with substrate in the catalytic mechanism. I203 is a pyruvate binding site.

This sequence belongs to the DapA family. In terms of assembly, homodimer.

It localises to the cytoplasm. It catalyses the reaction L-aspartate 4-semialdehyde + pyruvate = (2S,4S)-4-hydroxy-2,3,4,5-tetrahydrodipicolinate + H2O + H(+). It functions in the pathway amino-acid biosynthesis; L-lysine biosynthesis via DAP pathway; (S)-tetrahydrodipicolinate from L-aspartate: step 3/4. Its function is as follows. Catalyzes the condensation of (S)-aspartate-beta-semialdehyde [(S)-ASA] and pyruvate to 4-hydroxy-tetrahydrodipicolinate (HTPA). This Pseudomonas putida (strain W619) protein is 4-hydroxy-tetrahydrodipicolinate synthase.